Here is a 188-residue protein sequence, read N- to C-terminus: Putative manganese efflux pump MntP (188 aa).

The next 6 helical transmembrane spans lie at 3 to 23 (LYALLLVALGMSMDAFAVALA), 35 to 55 (IAATALVFGTVEAFMPLAGWV), 63 to 83 (FISEWDHWVAFVLLGGLGLKM), 104 to 126 (WMTVLTAFGTSIDSMIVGVGLAF), 140 to 160 (MAATVMVTIGLTAGKAFGVLF), and 167 to 187 (AGGLVLIAIGTWTLLSHLGLI).

The protein belongs to the MntP (TC 9.B.29) family.

The protein resides in the cell inner membrane. Probably functions as a manganese efflux pump. The sequence is that of Putative manganese efflux pump MntP from Neisseria gonorrhoeae (strain ATCC 700825 / FA 1090).